The sequence spans 473 residues: Siroheme synthase 2 (473 aa).

Residues 1–204 are precorrin-2 dehydrogenase /sirohydrochlorin ferrochelatase; that stretch reads MDYFPIFCQL…NDHVQADQHV (204 aa). NAD(+)-binding positions include 22-23 and 43-44; these read EI and CE. The residue at position 128 (Ser-128) is a Phosphoserine. The interval 216–473 is uroporphyrinogen-III C-methyltransferase; the sequence is GEVVLVGAGP…KVTECVAHVG (258 aa). Pro-225 is an S-adenosyl-L-methionine binding site. Asp-248 serves as the catalytic Proton acceptor. The active-site Proton donor is Lys-270. S-adenosyl-L-methionine contacts are provided by residues 301-303, Ile-306, 331-332, Met-382, and Gly-411; these read GGD and TA.

The protein in the N-terminal section; belongs to the precorrin-2 dehydrogenase / sirohydrochlorin ferrochelatase family. It in the C-terminal section; belongs to the precorrin methyltransferase family.

It carries out the reaction uroporphyrinogen III + 2 S-adenosyl-L-methionine = precorrin-2 + 2 S-adenosyl-L-homocysteine + H(+). It catalyses the reaction precorrin-2 + NAD(+) = sirohydrochlorin + NADH + 2 H(+). The enzyme catalyses siroheme + 2 H(+) = sirohydrochlorin + Fe(2+). It functions in the pathway cofactor biosynthesis; adenosylcobalamin biosynthesis; precorrin-2 from uroporphyrinogen III: step 1/1. Its pathway is cofactor biosynthesis; adenosylcobalamin biosynthesis; sirohydrochlorin from precorrin-2: step 1/1. The protein operates within porphyrin-containing compound metabolism; siroheme biosynthesis; precorrin-2 from uroporphyrinogen III: step 1/1. It participates in porphyrin-containing compound metabolism; siroheme biosynthesis; siroheme from sirohydrochlorin: step 1/1. It functions in the pathway porphyrin-containing compound metabolism; siroheme biosynthesis; sirohydrochlorin from precorrin-2: step 1/1. Multifunctional enzyme that catalyzes the SAM-dependent methylations of uroporphyrinogen III at position C-2 and C-7 to form precorrin-2 via precorrin-1. Then it catalyzes the NAD-dependent ring dehydrogenation of precorrin-2 to yield sirohydrochlorin. Finally, it catalyzes the ferrochelation of sirohydrochlorin to yield siroheme. The protein is Siroheme synthase 2 of Yersinia pseudotuberculosis serotype O:1b (strain IP 31758).